Reading from the N-terminus, the 68-residue chain is uncharacterized protein (68 aa).

This is an uncharacterized protein from Dryophytes versicolor (chameleon treefrog).